A 329-amino-acid polypeptide reads, in one-letter code: uncharacterized protein (329 aa).

10 consecutive transmembrane segments (helical) span residues 9 to 29, 53 to 73, 105 to 125, 126 to 146, 154 to 174, 179 to 199, 210 to 230, 240 to 260, 273 to 293, and 296 to 316; these read LMGL…NVIV, SHSF…MALI, FLMF…PTGI, AITL…RLFN, WLVI…AYGG, LVLG…YTVF, VPFT…CLII, WLAI…GHVL, AAII…LAIQ, and LTNI…LLNY. EamA domains are found at residues 103-169 and 191-316; these read CGFL…LTIP and IVYA…LLNY.

Belongs to the EamA transporter family.

The protein resides in the cell membrane. This is an uncharacterized protein from Synechocystis sp. (strain ATCC 27184 / PCC 6803 / Kazusa).